The following is a 163-amino-acid chain: Nucleotide-binding protein tll0793 (163 aa).

The protein belongs to the YajQ family.

Functionally, nucleotide-binding protein. This Thermosynechococcus vestitus (strain NIES-2133 / IAM M-273 / BP-1) protein is Nucleotide-binding protein tll0793.